The primary structure comprises 539 residues: Histone-arginine methyltransferase CARMER (539 aa).

One can recognise an SAM-dependent MTase PRMT-type domain in the interval 149-458 (ASQYFQFYGY…QSYDVTIDLH (310 aa)). Residues Gln-162, Arg-171, Gly-195, Glu-217, Glu-246, and Thr-274 each contribute to the S-adenosyl-L-methionine site. Residue Arg-509 is modified to Asymmetric dimethylarginine; by autocatalysis.

The protein belongs to the class I-like SAM-binding methyltransferase superfamily. Protein arginine N-methyltransferase family. In terms of assembly, homodimer. The dimethylated protein is the major form.

The protein resides in the cytoplasm. It is found in the nucleus. The enzyme catalyses L-arginyl-[protein] + 2 S-adenosyl-L-methionine = N(omega),N(omega)-dimethyl-L-arginyl-[protein] + 2 S-adenosyl-L-homocysteine + 2 H(+). Its function is as follows. Methylates (mono- and asymmetric dimethylation) the guanidino nitrogens of arginyl residues in proteins. May methylate histone H3 at 'Arg-17' and activate transcription via chromatin remodeling. The polypeptide is Histone-arginine methyltransferase CARMER (Art4) (Drosophila mojavensis (Fruit fly)).